A 327-amino-acid polypeptide reads, in one-letter code: Malate dehydrogenase (327 aa).

Position 11–17 (11–17 (GAAGQIG)) interacts with NAD(+). Substrate contacts are provided by R92 and R98. Residues N105, Q112, and 129-131 (VGN) each bind NAD(+). Substrate-binding residues include N131 and R162. H187 (proton acceptor) is an active-site residue.

Belongs to the LDH/MDH superfamily. MDH type 2 family.

The enzyme catalyses (S)-malate + NAD(+) = oxaloacetate + NADH + H(+). In terms of biological role, catalyzes the reversible oxidation of malate to oxaloacetate. The chain is Malate dehydrogenase from Leptospira biflexa serovar Patoc (strain Patoc 1 / Ames).